The following is a 169-amino-acid chain: Copper-resistant cuproprotein CopI (169 aa).

A signal peptide spans 1–20; that stretch reads MIKKTLLVIALTFTVTTAFA. Positions 98, 153, 158, and 163 each coordinate Cu(2+).

It belongs to the CopI family.

The protein localises to the periplasm. Functionally, involved in copper tolerance. Mediates copper tolerance in aerobiosis. May also mediate tolerance under anaerobiosis. Not required for virulence or colonization in the mouse model. The protein is Copper-resistant cuproprotein CopI of Vibrio cholerae serotype O1 (strain ATCC 39315 / El Tor Inaba N16961).